Here is a 234-residue protein sequence, read N- to C-terminus: NLP effector protein 10 (234 aa).

An N-terminal signal peptide occupies residues 1-17; it reads MFKTFIIAAVAVATVRA. N-linked (GlcNAc...) asparagine glycosylation occurs at asparagine 65. The Conserved undecapeptide motif I motif lies at 101–111; it reads AIMYSWYFPKD. The Hepta-peptide GHRHDWE motif II signature appears at 118–124; that stretch reads GHRHDWE.

The protein belongs to the Necrosis inducing protein (NPP1) family.

The protein localises to the secreted. In terms of biological role, secreted effector that contributes moderately to virulence during infection by P.capsici. Does not cause visible reaction of C.annuum for several days after inoculation, but by 7 days after inoculation, small necrotic lesions become visible. Leads only to chlorotic areas, without necrosis at 7 days after non-host N.benthamiana leaves infection. The chain is NLP effector protein 10 from Phytophthora capsici.